The sequence spans 743 residues: MTISNSVPITPELIAAHGLKPDEYQRILDLVGREPSFTELGIFSAMWNEHCSYKSSKKWLRTLPTTGPQVIQGPGENAGVVDIGDGDCVVFKMESHNHPSFIEPYQGAATGVGGILRDVFTMGARPIAAMNALRFGAPDHPKTRHLVAGVVSGVGGYGNSFGVPTVGGEVNFDARYNGNILVNAFAAGLAKTNAIFLSEAKGVGLPVVYLGAKTGRDGVGGATMASAEFDDKIDEKRPTVQVGDPFTEKCLLEACLELMASGAVIAIQDMGAAGLTCSAVEMGAKGDLGIELDLDKVPVREERMSAYEMMLSESQERMLMVLRPEKEKEAEAIFHKWGLDFAIVGKTTDDLRFRVLHQGDQVADLPIKDLGDKAPEYDRPWIEPKKPAPLAANDIPQADVADALLKLLGGPDLSSRRWVWEQYDTLIQGNSLQLPGGDAGVVRVEGHATKALAFSSDVTPRYCEADPYEGGKQAVAECWRNLTATGALPLAATDNLNFGNPERPEIMGQLVGAVKGIGDACRALGFPIVSGNVSLYNETNGQGILPTPTIGGVGLIADWSKMVRTGFAAQDQMILLVGAPASWGTHLGQSVYFRDIHGRTDGPPPPVDLAHEKRVGDHVRSLIASGIVTAAHDVSDGGIAVALAEMAMASGIGATVPGLVGTDPIPVWFGEDQGRYLLTLSIDPHGDEWDAIRKQQGELGIFAPWIGSTGGDALKLGDAKAIPVGDLKAAHEGWFPRFMDQAS.

The active site involves H50. Y53 and K92 together coordinate ATP. E94 provides a ligand contact to Mg(2+). Substrate-binding positions include 95–98 (SHNH) and R117. The active-site Proton acceptor is H96. D118 is a binding site for Mg(2+). Position 241 (Q241) interacts with substrate. D269 contacts Mg(2+). 313–315 (ESQ) serves as a coordination point for substrate. ATP-binding residues include D494 and G531. Residue N532 participates in Mg(2+) binding. Position 534 (S534) interacts with substrate.

It belongs to the FGAMS family. Monomer. Part of the FGAM synthase complex composed of 1 PurL, 1 PurQ and 2 PurS subunits.

The protein localises to the cytoplasm. The catalysed reaction is N(2)-formyl-N(1)-(5-phospho-beta-D-ribosyl)glycinamide + L-glutamine + ATP + H2O = 2-formamido-N(1)-(5-O-phospho-beta-D-ribosyl)acetamidine + L-glutamate + ADP + phosphate + H(+). It participates in purine metabolism; IMP biosynthesis via de novo pathway; 5-amino-1-(5-phospho-D-ribosyl)imidazole from N(2)-formyl-N(1)-(5-phospho-D-ribosyl)glycinamide: step 1/2. Part of the phosphoribosylformylglycinamidine synthase complex involved in the purines biosynthetic pathway. Catalyzes the ATP-dependent conversion of formylglycinamide ribonucleotide (FGAR) and glutamine to yield formylglycinamidine ribonucleotide (FGAM) and glutamate. The FGAM synthase complex is composed of three subunits. PurQ produces an ammonia molecule by converting glutamine to glutamate. PurL transfers the ammonia molecule to FGAR to form FGAM in an ATP-dependent manner. PurS interacts with PurQ and PurL and is thought to assist in the transfer of the ammonia molecule from PurQ to PurL. In Mesorhizobium japonicum (strain LMG 29417 / CECT 9101 / MAFF 303099) (Mesorhizobium loti (strain MAFF 303099)), this protein is Phosphoribosylformylglycinamidine synthase subunit PurL.